The primary structure comprises 299 residues: GTPase Era (299 aa).

Residues 8–176 form the Era-type G domain; the sequence is RCGYVAIVGR…EKLVGERLPE (169 aa). Positions 16-23 are G1; the sequence is GRPNVGKS. 16-23 is a GTP binding site; sequence GRPNVGKS. A G2 region spans residues 42–46; sequence QTTRH. The segment at 63 to 66 is G3; sequence DTPG. Residues 63 to 67 and 125 to 128 contribute to the GTP site; these read DTPGL and NKAD. The G4 stretch occupies residues 125–128; it reads NKAD. The segment at 155-157 is G5; that stretch reads ISA. In terms of domain architecture, KH type-2 spans 199–283; that stretch reads IREKIMRQLG…MLNLWVKVKG (85 aa).

The protein belongs to the TRAFAC class TrmE-Era-EngA-EngB-Septin-like GTPase superfamily. Era GTPase family. Monomer.

The protein resides in the cytoplasm. It is found in the cell inner membrane. Functionally, an essential GTPase that binds both GDP and GTP, with rapid nucleotide exchange. Plays a role in 16S rRNA processing and 30S ribosomal subunit biogenesis and possibly also in cell cycle regulation and energy metabolism. This chain is GTPase Era, found in Ectopseudomonas mendocina (strain ymp) (Pseudomonas mendocina).